We begin with the raw amino-acid sequence, 91 residues long: Large ribosomal subunit protein uL23c (91 aa).

Belongs to the universal ribosomal protein uL23 family. In terms of assembly, part of the 50S ribosomal subunit.

Its subcellular location is the plastid. The protein localises to the chloroplast. Binds to 23S rRNA. In Pinus koraiensis (Korean pine), this protein is Large ribosomal subunit protein uL23c (rpl23).